Consider the following 634-residue polypeptide: DNA-directed RNA polymerase subunit gamma (634 aa).

The Zn(2+) site is built by Cys74, Cys76, Cys89, and Cys92. Mg(2+) contacts are provided by Asp471, Asp473, and Asp475.

The protein belongs to the RNA polymerase beta' chain family. RpoC1 subfamily. In terms of assembly, in cyanobacteria the RNAP catalytic core is composed of 2 alpha, 1 beta, 1 beta', 1 gamma and 1 omega subunit. When a sigma factor is associated with the core the holoenzyme is formed, which can initiate transcription. The cofactor is Mg(2+). Zn(2+) serves as cofactor.

The enzyme catalyses RNA(n) + a ribonucleoside 5'-triphosphate = RNA(n+1) + diphosphate. Functionally, DNA-dependent RNA polymerase catalyzes the transcription of DNA into RNA using the four ribonucleoside triphosphates as substrates. In Synechococcus sp. (strain CC9311), this protein is DNA-directed RNA polymerase subunit gamma.